Here is a 522-residue protein sequence, read N- to C-terminus: Ribonuclease Y (522 aa).

A helical transmembrane segment spans residues 7–27; that stretch reads STILYCLFFFFLGIAAVLAFI. The KH domain occupies 212–272; that stretch reads TTSTVGVPTD…VRREVARMSL (61 aa). Positions 338-431 constitute an HD domain; that stretch reads VLRHSVEVAF…VATADACSAS (94 aa).

It belongs to the RNase Y family.

It localises to the cell membrane. Functionally, endoribonuclease that initiates mRNA decay. The polypeptide is Ribonuclease Y (Rhodopirellula baltica (strain DSM 10527 / NCIMB 13988 / SH1)).